The following is a 394-amino-acid chain: Chaperone protein DnaJ (394 aa).

The J domain maps to 4 to 68 (DYYEILGVSR…ELKARYDRFG (65 aa)). The CR-type zinc finger occupies 136–218 (GGEKQIRISH…CNGEGLAQTT (83 aa)). The Zn(2+) site is built by Cys149, Cys152, Cys166, Cys169, Cys192, Cys195, Cys206, and Cys209. CXXCXGXG motif repeat units lie at residues 149-156 (CNVCGGSG), 166-173 (CPTCGGSG), 192-199 (CPTCGGSG), and 206-213 (CYNCNGEG).

Belongs to the DnaJ family. In terms of assembly, homodimer. The cofactor is Zn(2+).

The protein localises to the cytoplasm. Functionally, participates actively in the response to hyperosmotic and heat shock by preventing the aggregation of stress-denatured proteins and by disaggregating proteins, also in an autonomous, DnaK-independent fashion. Unfolded proteins bind initially to DnaJ; upon interaction with the DnaJ-bound protein, DnaK hydrolyzes its bound ATP, resulting in the formation of a stable complex. GrpE releases ADP from DnaK; ATP binding to DnaK triggers the release of the substrate protein, thus completing the reaction cycle. Several rounds of ATP-dependent interactions between DnaJ, DnaK and GrpE are required for fully efficient folding. Also involved, together with DnaK and GrpE, in the DNA replication of plasmids through activation of initiation proteins. The chain is Chaperone protein DnaJ from Synechococcus sp. (strain JA-2-3B'a(2-13)) (Cyanobacteria bacterium Yellowstone B-Prime).